The sequence spans 459 residues: tRNA modification GTPase MnmE (459 aa).

Residues R23, E85, and R124 each coordinate (6S)-5-formyl-5,6,7,8-tetrahydrofolate. Residues 221-380 (GLSTAIIGRP…LEKAIADTFF (160 aa)) enclose the TrmE-type G domain. Position 231 (N231) interacts with K(+). GTP contacts are provided by residues 231–236 (NVGKSS), 250–256 (TEIPGTT), and 275–278 (DTAG). S235 serves as a coordination point for Mg(2+). The K(+) site is built by T250, I252, and T255. T256 provides a ligand contact to Mg(2+). (6S)-5-formyl-5,6,7,8-tetrahydrofolate is bound at residue K459.

Belongs to the TRAFAC class TrmE-Era-EngA-EngB-Septin-like GTPase superfamily. TrmE GTPase family. Homodimer. Heterotetramer of two MnmE and two MnmG subunits. K(+) serves as cofactor.

It localises to the cytoplasm. Its function is as follows. Exhibits a very high intrinsic GTPase hydrolysis rate. Involved in the addition of a carboxymethylaminomethyl (cmnm) group at the wobble position (U34) of certain tRNAs, forming tRNA-cmnm(5)s(2)U34. In Oceanobacillus iheyensis (strain DSM 14371 / CIP 107618 / JCM 11309 / KCTC 3954 / HTE831), this protein is tRNA modification GTPase MnmE.